The chain runs to 104 residues: Late embryogenis abundant protein 41 (104 aa).

A mitochondrion-targeting transit peptide spans 1–31 (MAARSLSGAVKSLCSAASGSLSCSIVLRRSY).

The protein belongs to the LEA type 3 family.

The protein resides in the mitochondrion. The polypeptide is Late embryogenis abundant protein 41 (Arabidopsis thaliana (Mouse-ear cress)).